The following is an 844-amino-acid chain: Janus kinase and microtubule-interacting protein 3 (844 aa).

The stretch at 8–258 (SRAKGDKAEA…QLSQVREADR (251 aa)) forms a coiled coil. The tract at residues 250 to 290 (LSQVREADRHPGSPRRELPHAAGAGDASDHSGSPEQQLDEK) is disordered. Residues 254 to 268 (READRHPGSPRRELP) show a composition bias toward basic and acidic residues. The segment covering 269-282 (HAAGAGDASDHSGS) has biased composition (low complexity). A coiled-coil region spans residues 289–421 (EKDARRFQLK…DELSKTLETA (133 aa)). Ser384 is modified (phosphoserine). A compositionally biased stretch (polar residues) spans 466–483 (SDGSSVSYQTDRTDQTPC). The tract at residues 466 to 489 (SDGSSVSYQTDRTDQTPCTPDDDL) is disordered. Coiled coils occupy residues 493 to 621 (MAKE…RERK) and 683 to 834 (VLTL…FLFL).

It belongs to the JAKMIP family. As to expression, specifically expressed in the CNS and endocrine tissues. Also detected in other tissues including heart, testis and prostate.

The protein localises to the golgi apparatus. This is Janus kinase and microtubule-interacting protein 3 (JAKMIP3) from Homo sapiens (Human).